A 1134-amino-acid chain; its full sequence is Sterol regulatory element-binding protein 1 (1134 aa).

A transcriptional activation (acidic) region spans residues 1-60 (MDELAFGEAALEQTLAEMCELDTAVLNDIEDMLQLINNQDSDFPGLFDAPYAGGETGDTG). Residues 1–477 (MDELAFGEAA…HSRGMLDRSR (477 aa)) lie on the Cytoplasmic side of the membrane. The 9aaTAD signature appears at 27-35 (NDIEDMLQL). The segment at 46 to 73 (LFDAPYAGGETGDTGPSSPGANSPESFS) is disordered. Positions 59–69 (TGPSSPGANSP) are enriched in polar residues. Residues Ser96 and Ser115 each carry the phosphoserine modification. 2 disordered regions span residues 130 to 149 (LQPA…SFPA) and 170 to 195 (SGTL…VLPT). Polar residues predominate over residues 170–179 (SGTLPGNTQQ). The interaction with LMNA stretch occupies residues 227–487 (QQVPVVLQPH…LALCVLAFLC (261 aa)). The 51-residue stretch at 317 to 367 (EKRTAHNAIEKRYRSSINDKIVELKDLVVGTEAKLNKSAVLRKAIDYIRFL) folds into the bHLH domain. Phosphoserine; by SIK1 is present on residues Ser331 and Ser332. The interval 367–388 (LQHSNQKLKQENLTLRSAHKSK) is leucine-zipper. Phosphoserine; by AMPK is present on Ser389. Phosphoserine; by SIK1 is present on Ser395. The tract at residues 415–468 (VETLTPPPSDAGSPSQSSPLSFGSRASSSGGSDSEPDSPAFEDSQVKAQRLPSH) is disordered. A compositionally biased stretch (low complexity) spans 424–453 (DAGSPSQSSPLSFGSRASSSGGSDSEPDSP). Residue Ser448 is modified to Phosphoserine. A helical membrane pass occupies residues 478-498 (LALCVLAFLCLTCNPLASLFG). The Lumenal segment spans residues 499-536 (WGILTPSDATGTHRSSGRSMLEAESRDGSNWTQWLLPP). The chain crosses the membrane as a helical span at residues 537-557 (LVWLANGLLVLACLALLFVYG). The Cytoplasmic portion of the chain corresponds to 558–1134 (EPVTRPHSGP…LGGGTTVTSS (577 aa)). Ser1047 carries the phosphoserine modification.

This sequence belongs to the SREBP family. In terms of assembly, forms a tight complex with SCAP, the SCAP-SREBP complex, in the endoplasmic reticulum membrane and the Golgi apparatus. Interacts with PAQR3; the interaction anchors the SCAP-SREBP complex to the Golgi apparatus in low cholesterol conditions. As to quaternary structure, efficient DNA binding of the soluble transcription factor fragment requires dimerization with another bHLH protein. Interacts with CEBPA, the interaction produces a transcriptional synergy. Interacts with LMNA. Post-translationally, processed in the Golgi apparatus, releasing the protein from the membrane. At low cholesterol the SCAP-SREBP complex is recruited into COPII vesicles for export from the endoplasmic reticulum. In the Golgi, complex SREBPs are cleaved sequentially by site-1 (MBTPS1, S1P) and site-2 (MBTPS2, S2P) proteases. The first cleavage by site-1 protease occurs within the luminal loop, the second cleavage by site-2 protease occurs within the first transmembrane domain, releasing the transcription factor from the Golgi membrane. In terms of processing, phosphorylated by AMPK, leading to suppress protein processing and nuclear translocation, and repress target gene expression. Phosphorylation at Ser-389 by SIK1 represses activity possibly by inhibiting DNA-binding. SCAP-free SREBF1 is ubiquitinated by the BCR(ARMC5) complex, leading to its degradation. Post-translationally, ubiquitinated; the nuclear form has a rapid turnover and is rapidly ubiquitinated and degraded by the proteasome in the nucleus. Predominant isoform expressed in most tissues. Predominates in liver, adrenal gland, brain and adipose tissue. Also found in kidney, thymus, testis, muscle, jejunum, and ileum. In terms of tissue distribution, expressed only in select tissues, such as intestinal epithelial, heart, macrophage and bone marrow dendritic cells. Also found in kidney, thymus, testis, muscle, jejunum, and ileum.

Its subcellular location is the endoplasmic reticulum membrane. It is found in the golgi apparatus membrane. The protein resides in the cytoplasmic vesicle. It localises to the COPII-coated vesicle membrane. The protein localises to the nucleus. With respect to regulation, activation by cleavage is down-regulated upon activation of SIRT3-dependent PRKAA1/AMPK-alpha signaling cascade which leads to inhibition of ATP-consuming lipogenesis to restore cellular energy balance. In terms of biological role, precursor of the transcription factor form (Processed sterol regulatory element-binding protein 1), which is embedded in the endoplasmic reticulum membrane. Low sterol concentrations promote processing of this form, releasing the transcription factor form that translocates into the nucleus and activates transcription of genes involved in cholesterol biosynthesis and lipid homeostasis. Functionally, key transcription factor that regulates expression of genes involved in cholesterol biosynthesis and lipid homeostasis. Binds to the sterol regulatory element 1 (SRE-1) (5'-ATCACCCCAC-3'). Has dual sequence specificity binding to both an E-box motif (5'-ATCACGTGA-3') and to SRE-1 (5'-ATCACCCCAC-3'). Regulates the promoters of genes involved in cholesterol biosynthesis and the LDL receptor (LDLR) pathway of sterol regulation. Its function is as follows. Isoform expressed only in select tissues, which has higher transcriptional activity compared to SREBP-1C. Able to stimulate both lipogenic and cholesterogenic gene expression. Has a role in the nutritional regulation of fatty acids and triglycerides in lipogenic organs such as the liver. Required for innate immune response in macrophages by regulating lipid metabolism. Predominant isoform expressed in most tissues, which has weaker transcriptional activity compared to isoform SREBP-1A. Primarily controls expression of lipogenic gene. Strongly activates global lipid synthesis in rapidly growing cells. This chain is Sterol regulatory element-binding protein 1, found in Mus musculus (Mouse).